We begin with the raw amino-acid sequence, 211 residues long: MELADIRREYTKGGLRRKDLKADPIDQFNLWLEQAVQAGMTDPTAMTVATVDENGMPFQRIVLLKSVDKDGFVFYTNLGSRKAQQLGHNSNISLHFPWHPLERQVHITGVAEKLTPMENMKYFTSRPKESQLAAIASKQSSRISARGVLEGKFLELKQKFAKGEIPMPTFWGGFRVKPQSIEFWQGGEHRLHDRFLFSNQEGEWDIDRLAP.

Substrate contacts are provided by residues 7–10 (RREY) and Lys-65. FMN-binding positions include 60–65 (RIVLLK), 75–76 (YT), Arg-81, Lys-82, and Gln-104. Substrate-binding residues include Tyr-122, Arg-126, and Ser-130. Residues 139 to 140 (QS) and Trp-184 contribute to the FMN site. 190–192 (RLH) contributes to the substrate binding site. Arg-194 contributes to the FMN binding site.

This sequence belongs to the pyridoxamine 5'-phosphate oxidase family. As to quaternary structure, homodimer. FMN serves as cofactor.

It catalyses the reaction pyridoxamine 5'-phosphate + O2 + H2O = pyridoxal 5'-phosphate + H2O2 + NH4(+). The enzyme catalyses pyridoxine 5'-phosphate + O2 = pyridoxal 5'-phosphate + H2O2. The protein operates within cofactor metabolism; pyridoxal 5'-phosphate salvage; pyridoxal 5'-phosphate from pyridoxamine 5'-phosphate: step 1/1. It functions in the pathway cofactor metabolism; pyridoxal 5'-phosphate salvage; pyridoxal 5'-phosphate from pyridoxine 5'-phosphate: step 1/1. Catalyzes the oxidation of either pyridoxine 5'-phosphate (PNP) or pyridoxamine 5'-phosphate (PMP) into pyridoxal 5'-phosphate (PLP). The polypeptide is Pyridoxine/pyridoxamine 5'-phosphate oxidase (Vibrio campbellii (strain ATCC BAA-1116)).